The primary structure comprises 498 residues: Cytochrome P450 monooxygenase idtP (498 aa).

A signal peptide spans 1-20 (MFLLHILAIGACLLWYFVRS). Cys439 provides a ligand contact to heme.

The protein belongs to the cytochrome P450 family. Requires heme as cofactor.

Its pathway is secondary metabolite biosynthesis. Cytochrome P450 monooxygenase; part of the gene cluster that mediates the biosynthesis of paspalitrems, indole-diterpene (IDT) mycotoxins that are potent tremorgens in mammals. The geranylgeranyl diphosphate (GGPP) synthase idtG is proposed to catalyze the first step in IDT biosynthesis via catalysis of a series of iterative condensations of isopentenyl diphosphate (IPP) with dimethylallyl diphosphate (DMAPP), geranyl diphosphate (GPP), and farnesyl diphosphate (FPP), to form GGPP. Condensation of indole-3-glycerol phosphate with GGPP by the prenyltransferase idtC then forms 3-geranylgeranylindole (3-GGI). Epoxidation of the two terminal alkenes of the geranylgeranyl moiety by the FAD-dependent monooxygenase idtM, and cyclization by the terpene cyclase idtB then leads to the production of paspaline. The cytochrome P450 monooxygenase idtP then catalyzes oxidative elimination of the pendant methyl group at C-12 of paspaline and generates the C-10 ketone to yield 13-desoxypaxilline. The cytochrome P450 monooxygenase idtQ may catalyze the C-13 oxidation of 13-desoxypaxilline to afford paxilline. Considering that both paspalicine and paxilline were detected in C.paspali, idtQ also catalyzes the formation of paspalinine from 13-desoxypaxilline via paspalicine as an intermediate. Finally, the alpha-prenyltransferase idtF prenylates paspalinine at the C-20 or the C-21 positions to yield paspalitrems A and C, respectively. The hydroxylation of paspalitrem A at C-32 by a still unknown oxidase affords paspalitrem B. The chain is Cytochrome P450 monooxygenase idtP from Claviceps paspali (Rye ergot fungus).